Consider the following 363-residue polypeptide: MSHNTFGHLFRVTTWGESHGPALGCVIDGCPPGLSLDAPFIQQFLDKRRPGTSRFVTQRQEADEVKILSGVFEDDRTDGPVTTGTPISLMIENTDQRSKDYREIRDRYRPGHADYAYDQKYGVRDYRGGGRSSARETAARVAAGAVARRVLGEDILLRGAVVQIGPHMIDPKNWDWAETQNNPFWCPDAKMAAQWETYLDSVRKSGSSTGAIVEVHASGVPAGWGAPVYGKLDAELAGAMMSINAAKGVEIGAGFAAASMSGEENADEMRAGNDAPRFLANNNGGVAGGISTGQDIVVRIAIKPTSSILNEVKSITRDGEEVDVRTIGRHDPCVGIRAVPVAEAMLACVLADAKLRHRGQTGH.

Positions 48 and 54 each coordinate NADP(+). FMN is bound by residues 131 to 133, 244 to 245, Gly-288, 303 to 307, and Arg-329; these read RSS, NA, and KPTSS.

It belongs to the chorismate synthase family. Homotetramer. Requires FMNH2 as cofactor.

The catalysed reaction is 5-O-(1-carboxyvinyl)-3-phosphoshikimate = chorismate + phosphate. It participates in metabolic intermediate biosynthesis; chorismate biosynthesis; chorismate from D-erythrose 4-phosphate and phosphoenolpyruvate: step 7/7. Functionally, catalyzes the anti-1,4-elimination of the C-3 phosphate and the C-6 proR hydrogen from 5-enolpyruvylshikimate-3-phosphate (EPSP) to yield chorismate, which is the branch point compound that serves as the starting substrate for the three terminal pathways of aromatic amino acid biosynthesis. This reaction introduces a second double bond into the aromatic ring system. The protein is Chorismate synthase of Hyphomonas neptunium (strain ATCC 15444).